A 95-amino-acid polypeptide reads, in one-letter code: Small ribosomal subunit protein bS18 (95 aa).

It belongs to the bacterial ribosomal protein bS18 family. In terms of assembly, part of the 30S ribosomal subunit. Forms a tight heterodimer with protein bS6.

In terms of biological role, binds as a heterodimer with protein bS6 to the central domain of the 16S rRNA, where it helps stabilize the platform of the 30S subunit. In Ehrlichia canis (strain Jake), this protein is Small ribosomal subunit protein bS18.